Reading from the N-terminus, the 201-residue chain is MAEPGFFNAMLIGALIFGYVLGSIPFGLILARLAGLGDVRAIGSGNIGATNVLRTGNKKLAAATLILDALKGTAAALIAAHFGQNAAIAAGFGAFIGHLFPVWIGFKGGKGVATYLGVLIGLAWAGALVFAAAWIVTALLTRYSSLSALVASLVVPIALYSRGNQALAALFAIMTVIVFIKHRANISRLLNGTESKIGAKG.

The next 6 membrane-spanning stretches (helical) occupy residues 10–30 (MLIGALIFGYVLGSIPFGLIL), 60–80 (LAAATLILDALKGTAAALIAA), 86–106 (AAIAAGFGAFIGHLFPVWIGF), 116–136 (LGVLIGLAWAGALVFAAAWIV), 139–159 (LLTRYSSLSALVASLVVPIAL), and 166–186 (ALAALFAIMTVIVFIKHRANI).

Belongs to the PlsY family. Probably interacts with PlsX.

The protein localises to the cell inner membrane. It carries out the reaction an acyl phosphate + sn-glycerol 3-phosphate = a 1-acyl-sn-glycero-3-phosphate + phosphate. It participates in lipid metabolism; phospholipid metabolism. In terms of biological role, catalyzes the transfer of an acyl group from acyl-phosphate (acyl-PO(4)) to glycerol-3-phosphate (G3P) to form lysophosphatidic acid (LPA). This enzyme utilizes acyl-phosphate as fatty acyl donor, but not acyl-CoA or acyl-ACP. This is Glycerol-3-phosphate acyltransferase from Brucella suis (strain ATCC 23445 / NCTC 10510).